The sequence spans 176 residues: Peptide deformylase (176 aa).

Fe cation contacts are provided by Cys-94 and His-136. Residue Glu-137 is part of the active site. Fe cation is bound at residue His-140.

The protein belongs to the polypeptide deformylase family. It depends on Fe(2+) as a cofactor.

It carries out the reaction N-terminal N-formyl-L-methionyl-[peptide] + H2O = N-terminal L-methionyl-[peptide] + formate. Its function is as follows. Removes the formyl group from the N-terminal Met of newly synthesized proteins. Requires at least a dipeptide for an efficient rate of reaction. N-terminal L-methionine is a prerequisite for activity but the enzyme has broad specificity at other positions. The chain is Peptide deformylase from Bartonella quintana (strain Toulouse) (Rochalimaea quintana).